A 635-amino-acid polypeptide reads, in one-letter code: MAPPLLLLLLASGAAACPLPCVCQNLSESLSTLCAHRGLLFVPPNVDRRTVELRLADNFIQALGPPDFRNMTGLVDLTLSRNAITRIGARAFGDLESLRSLHLDGNRLVELGTGSLRGPVNLQHLILSGNQLGRIAPGAFDDFLESLEDLDLSYNNLRQVPWAGIGAMPALHTLNLDHNLIDALPPGAFAQLGQLSRLDLTSNRLATLAPDPLFSRGRDAEASPAPLVLSFSGNPLHCNCELLWLRRLARPDDLETCASPPGLAGRYFWAVPEGEFSCEPPLIARHTQRLWVLEGQRATLRCRALGDPAPTMHWVGPDDRLVGNSSRARAFPNGTLEIGVTGAGDAGGYTCIATNPAGEATARVELRVLALPHGGNSSAEGGRPGPSDIAASARTAAEGEGTLESEPAVQVTEVTATSGLVSWGPGRPADPVWMFQIQYNSSEDETLIYRIVPASSHHFLLKHLVPGADYDLCLLALSPAAGPSDLTATRLLGCAHFSTLPASPLCHALQAHVLGGTLTVAVGGVLVAALLVFTVALLVRGRGAGNGRLPLKLSHVQSQTNGGPSPTPKAHPPRSPPPRPQRSCSLDLGDAGCYGYARRLGGAWARRSHSVHGGLLGAGCRGVGGSAERLEESVV.

Residues 1–16 (MAPPLLLLLLASGAAA) form the signal peptide. The region spanning 17–48 (CPLPCVCQNLSESLSTLCAHRGLLFVPPNVDR) is the LRRNT domain. The Extracellular segment spans residues 17–518 (CPLPCVCQNL…LQAHVLGGTL (502 aa)). 2 N-linked (GlcNAc...) asparagine glycosylation sites follow: asparagine 25 and asparagine 70. LRR repeat units lie at residues 49–70 (RTVE…DFRN), 73–94 (GLVD…AFGD), 97–118 (SLRS…SLRG), 121–142 (NLQH…AFDD), 146–161 (SLED…RQVP), 170–191 (ALHT…AFAQ), and 194–215 (QLSR…PLFS). One can recognise an LRRCT domain in the interval 234 to 280 (NPLHCNCELLWLRRLARPDDLETCASPPGLAGRYFWAVPEGEFSCEP). The Ig-like domain maps to 281-367 (PLIARHTQRL…GEATARVELR (87 aa)). Cysteine 302 and cysteine 351 form a disulfide bridge. N-linked (GlcNAc...) asparagine glycosylation is found at asparagine 324, asparagine 333, asparagine 376, and asparagine 440. A disordered region spans residues 373–410 (HGGNSSAEGGRPGPSDIAASARTAAEGEGTLESEPAVQ). Residues 405-502 (SEPAVQVTEV…GCAHFSTLPA (98 aa)) form the Fibronectin type-III domain. A helical membrane pass occupies residues 519–539 (TVAVGGVLVAALLVFTVALLV). Over 540–635 (RGRGAGNGRL…SAERLEESVV (96 aa)) the chain is Cytoplasmic. Residues 555 to 583 (HVQSQTNGGPSPTPKAHPPRSPPPRPQRS) form a disordered region. The span at 565–580 (SPTPKAHPPRSPPPRP) shows a compositional bias: pro residues. Serine 585 and serine 626 each carry phosphoserine. The PDZ-binding motif lies at 632-635 (ESVV).

The protein belongs to the LRFN family. Can form heteromeric complexes with LRFN1, LRFN2, LRFN3 and LRFN5. Unable to form homophilic interactions across cell junctions. Interacts with DLG1, DLG2, DLG3 and DLG4. Post-translationally, glycosylated.

The protein resides in the membrane. Its function is as follows. Promotes neurite outgrowth in hippocampal neurons. May play a role in redistributing DLG4 to the cell periphery. The chain is Leucine-rich repeat and fibronectin type-III domain-containing protein 4 (LRFN4) from Homo sapiens (Human).